The following is a 652-amino-acid chain: Neuroendocrine convertase 2 (652 aa).

An N-terminal signal peptide occupies residues methionine 1–alanine 22. A propeptide spanning residues valine 23–arginine 107 is cleaved from the precursor. The 346-residue stretch at glutamine 136–valine 481 folds into the Peptidase S8 domain. N-linked (GlcNAc...) asparagine glycosylation occurs at asparagine 167. Active-site charge relay system residues include aspartate 174 and histidine 215. 2 disulfide bridges follow: cysteine 232–cysteine 382 and cysteine 324–cysteine 354. An N-linked (GlcNAc...) asparagine glycan is attached at asparagine 290. Serine 390 serves as the catalytic Charge relay system. A glycan (N-linked (GlcNAc...) asparagine) is linked at asparagine 451. The 137-residue stretch at threonine 489–alanine 625 folds into the P/Homo B domain. A disulfide bridge connects residues cysteine 496 and cysteine 522. The interval isoleucine 501 to histidine 652 is required for ubiquitination-mediated degradation. N-linked (GlcNAc...) asparagine glycosylation is present at asparagine 542.

It belongs to the peptidase S8 family. Furin subfamily. In terms of assembly, interacts (via C-terminus) with F-box protein fsn-1 (via SPRY domain); the interaction results in egl-3 proteasomal degradation. In terms of processing, ubiquitinated. In terms of tissue distribution, expressed in head and tail ganglia. Expressed in neurons including mechanosensory and motor neurons, and interneurons (at protein level). Expressed in the nerve ring, ventral nerve cord and intestine.

Its subcellular location is the cell projection. It is found in the axon. It localises to the cytoplasmic vesicle. The protein localises to the secretory vesicle lumen. The protein resides in the secreted. The catalysed reaction is Release of protein hormones and neuropeptides from their precursors, generally by hydrolysis of -Lys-Arg-|- bonds.. Functionally, serine endoprotease which cleaves preproteins at paired basic amino acids. Processes FMRFamide-like (flp) and neuropeptide-like protein (nlp) neuropeptides. Probably by processing flp-1 and flp-18, modulates the neuronal excitation-inhibition balance and thus the level of activity of the locomotor circuit. Regulates sensitivity to mechanosensory stimuli. By processing neuropeptides, modulates basal acetylcholine release at the ventral cord neuromuscular junctions. Probably by processing flp neuropeptides, regulates the turning step of male mating behavior. Cleaves pro-insulin-like proteins ins-3, ins-4 and ins-6 into their mature active forms. Together with convertase kpc-1, cleaves pro-insulin-like protein ins-18. By controlling ins-4 and ins-6 processing and thus the activation of the daf-2/InsR pathway, negatively modulates synapse development and synaptic transmission at neuromuscular junctions. Similarly, by controlling ins-4 and ins-6 processing, negatively regulates dauer formation under optimal environmental conditions. Under adverse environmental conditions, may promote dauer formation by processing ins-18, a daf-2/InsR antagonist. May cleave dense-core vesicle membrane protein ida-1. Involved in egg-laying, fat storage and locomotion. This is Neuroendocrine convertase 2 from Caenorhabditis elegans.